We begin with the raw amino-acid sequence, 313 residues long: Aspartate carbamoyltransferase catalytic subunit (313 aa).

Residues Arg58 and Thr59 each contribute to the carbamoyl phosphate site. L-aspartate is bound at residue Lys86. Arg108, His136, and Gln139 together coordinate carbamoyl phosphate. 2 residues coordinate L-aspartate: Arg169 and Arg223. Carbamoyl phosphate contacts are provided by Gly264 and Pro265.

This sequence belongs to the aspartate/ornithine carbamoyltransferase superfamily. ATCase family. Heterododecamer (2C3:3R2) of six catalytic PyrB chains organized as two trimers (C3), and six regulatory PyrI chains organized as three dimers (R2).

It carries out the reaction carbamoyl phosphate + L-aspartate = N-carbamoyl-L-aspartate + phosphate + H(+). The protein operates within pyrimidine metabolism; UMP biosynthesis via de novo pathway; (S)-dihydroorotate from bicarbonate: step 2/3. Catalyzes the condensation of carbamoyl phosphate and aspartate to form carbamoyl aspartate and inorganic phosphate, the committed step in the de novo pyrimidine nucleotide biosynthesis pathway. The protein is Aspartate carbamoyltransferase catalytic subunit of Syntrophotalea carbinolica (strain DSM 2380 / NBRC 103641 / GraBd1) (Pelobacter carbinolicus).